The primary structure comprises 254 residues: NH(3)-dependent NAD(+) synthetase (254 aa).

29–36 (GLSGGIDS) serves as a coordination point for ATP. Aspartate 35 lines the Mg(2+) pocket. Residue arginine 115 coordinates deamido-NAD(+). Threonine 135 provides a ligand contact to ATP. Glutamate 140 is a Mg(2+) binding site. Deamido-NAD(+) is bound by residues lysine 148 and aspartate 155. ATP-binding residues include lysine 164 and serine 186. 245-246 (HK) is a binding site for deamido-NAD(+).

Belongs to the NAD synthetase family. In terms of assembly, homodimer.

The enzyme catalyses deamido-NAD(+) + NH4(+) + ATP = AMP + diphosphate + NAD(+) + H(+). It participates in cofactor biosynthesis; NAD(+) biosynthesis; NAD(+) from deamido-NAD(+) (ammonia route): step 1/1. Functionally, catalyzes the ATP-dependent amidation of deamido-NAD to form NAD. Uses ammonia as a nitrogen source. The polypeptide is NH(3)-dependent NAD(+) synthetase (Methanococcus aeolicus (strain ATCC BAA-1280 / DSM 17508 / OCM 812 / Nankai-3)).